The chain runs to 2588 residues: Histone-lysine N-methyltransferase, H3 lysine-36 specific (2588 aa).

2 positions are modified to phosphoserine: serine 110 and serine 118. Disordered stretches follow at residues 209 to 264 (GSEQ…LGDT) and 277 to 307 (LSFQ…TSQE). Residues 235–249 (EKQKNKQRSEVDGSN) are compositionally biased toward basic and acidic residues. Residues 298 to 307 (GTSSPSTSQE) show a composition bias toward polar residues. Serine 380 and serine 383 each carry phosphoserine. The tract at residues 383–403 (SADEKEKPCAKSRVRKSSDNI) is disordered. A Glycyl lysine isopeptide (Lys-Gly) (interchain with G-Cter in SUMO2) cross-link involves residue lysine 802. 3 disordered regions span residues 830–899 (ASYR…SDKR), 947–987 (ERKR…PGKE), and 1008–1133 (FDSK…PRLN). Residues 855–874 (GSSTPNSEKPGDSTQDSVHQ) are compositionally biased toward polar residues. Over residues 881-895 (SALSGELSSSLSSLA) the composition is skewed to low complexity. Basic and acidic residues predominate over residues 1008–1033 (FDSKAKQSDPDKNLEKEPSFENRKGP). The span at 1054-1073 (PKKRWQRLNQRRPKPGKRAN) shows a compositional bias: basic residues. Residue lysine 1237 forms a Glycyl lysine isopeptide (Lys-Gly) (interchain with G-Cter in SUMO2) linkage. The segment at 1279 to 1324 (ASPRPALESEELLVKTPGNYESKRQRKPTKKLLESNDLDPGFMPKK) is disordered. Residue serine 1408 is modified to Phosphoserine. 3 consecutive PHD-type zinc fingers follow at residues 1441–1487 (ENVC…CHTG), 1488–1544 (IHTC…CHAA), and 1605–1649 (VSWC…CKAG). A PWWP domain is found at 1654-1716 (YREIVWVKVG…QARVFPYMEG (63 aa)). One can recognise an AWS domain in the interval 1788-1838 (SEIPRCNCKATDENPCGIDSECINRMLLYECHPTVCPAGVRCQNQCFSKRQ). The SET domain occupies 1840–1957 (PDVEIFRTLQ…AGTELTFNYN (118 aa)). S-adenosyl-L-methionine-binding positions include 1850–1852 (RGW), 1892–1895 (TNFY), 1918–1919 (NH), asparagine 1963, and lysine 1969. An inhibits enzyme activity in the absence of bound histone region spans residues 1958-1964 (LECLGNG). Positions 1964–1980 (GKTVCKCGAPNCSGFLG) constitute a Post-SET domain. The disordered stretch occupies residues 1989–2010 (VTEEKSRKFKRKPHGKRRSQGE). Positions 1995 to 2006 (RKFKRKPHGKRR) are enriched in basic residues. Residues 2016–2063 (EDECFSCGDAGQLVSCKKPGCPKVYHADCLNLTKRPAGKWECPWHQCD) form a PHD-type 4; atypical zinc finger. Disordered regions lie at residues 2105–2320 (PCGP…PPPE), 2333–2423 (KEKA…PSEH), 2447–2521 (YESA…WGLG), and 2560–2588 (RGQD…SEKK). Residues 2179–2196 (RPPERTDSSSHLLDRIRD) show a composition bias toward basic and acidic residues. Over residues 2201 to 2212 (GTKSQSLVSSQR) the composition is skewed to polar residues. Residues 2213-2223 (PQDRPPAKEGP) show a composition bias toward basic and acidic residues. Residues 2232–2249 (SPMTRPSSSPSVSSLPLE) are compositionally biased toward low complexity. Over residues 2250–2261 (RPLRMTDSRLDK) the composition is skewed to basic and acidic residues. Serine 2267 carries the phosphoserine modification. The residue at position 2360 (threonine 2360) is a Phosphothreonine. Serine 2369 is subject to Phosphoserine. Residue lysine 2509 forms a Glycyl lysine isopeptide (Lys-Gly) (interchain with G-Cter in SUMO2) linkage.

This sequence belongs to the class V-like SAM-binding methyltransferase superfamily. As to quaternary structure, interacts with AR DNA- and ligand-binding domains. Interacts with the ligand-binding domains of RARA and THRA in the absence of ligand; in the presence of ligand the interaction is severely disrupted but some binding still occurs. Interacts with the ligand-binding domains of RXRA and ESRRA only in the presence of ligand. Interacts with ZNF496. In terms of tissue distribution, expressed in the embryo and the outer region of the uterine decidua at early post-implantation 5.5 dpc stage. Uniformly expressed in embryonic and extraembryonic tissues during gastrulation stage 7.5 dpc. Expressed differentially after stage 14.5 dpc with highest expression in proliferating cells. Enriched in the telencephalic region of the brain, spinal cord, intestinal crypt, tooth buds, thymus and salivary glands at stage 16.5 dpc. Also expressed in the ossification region of developing bones and in the periosteum.

It is found in the nucleus. The protein localises to the chromosome. It carries out the reaction L-lysyl(36)-[histone H3] + 2 S-adenosyl-L-methionine = N(6),N(6)-dimethyl-L-lysyl(36)-[histone H3] + 2 S-adenosyl-L-homocysteine + 2 H(+). Its function is as follows. Histone methyltransferase that dimethylates Lys-36 of histone H3 (H3K36me2). Transcriptional intermediary factor capable of negatively influencing transcription. May also positively influence transcription. Essential for early post-implantation development. The polypeptide is Histone-lysine N-methyltransferase, H3 lysine-36 specific (Mus musculus (Mouse)).